Here is a 349-residue protein sequence, read N- to C-terminus: tRNA pseudouridine synthase D (349 aa).

Substrate is bound at residue Phe-27. Asp-80 (nucleophile) is an active-site residue. Asn-129 contacts substrate. Residues 155–303 (GVPNYFGAQR…VEAARRAMLL (149 aa)) enclose the TRUD domain. Phe-329 serves as a coordination point for substrate.

It belongs to the pseudouridine synthase TruD family.

The enzyme catalyses uridine(13) in tRNA = pseudouridine(13) in tRNA. Its function is as follows. Responsible for synthesis of pseudouridine from uracil-13 in transfer RNAs. In Escherichia coli (strain 55989 / EAEC), this protein is tRNA pseudouridine synthase D.